We begin with the raw amino-acid sequence, 271 residues long: Putative phosphoenolpyruvate synthase regulatory protein (271 aa).

151-158 (GVSRSGKT) lines the ADP pocket.

It belongs to the pyruvate, phosphate/water dikinase regulatory protein family. PSRP subfamily.

The catalysed reaction is [pyruvate, water dikinase] + ADP = [pyruvate, water dikinase]-phosphate + AMP + H(+). The enzyme catalyses [pyruvate, water dikinase]-phosphate + phosphate + H(+) = [pyruvate, water dikinase] + diphosphate. Its function is as follows. Bifunctional serine/threonine kinase and phosphorylase involved in the regulation of the phosphoenolpyruvate synthase (PEPS) by catalyzing its phosphorylation/dephosphorylation. The sequence is that of Putative phosphoenolpyruvate synthase regulatory protein from Burkholderia multivorans (strain ATCC 17616 / 249).